Reading from the N-terminus, the 450-residue chain is Bestrophin homolog 1 (450 aa).

The Cytoplasmic segment spans residues 1–31; sequence MTINYHKEIMTSHPWTFFLLLFKWKGSIWKA. Residues 32–51 traverse the membrane as a helical segment; that stretch reads VYMETIIFLICYGIISVIYK. Over 52 to 60 the chain is Extracellular; the sequence is TAMGESSQR. The helical transmembrane segment at 61–82 threads the bilayer; sequence TFESLVRYFDKRLSYIPLEFVL. The Cytoplasmic segment spans residues 83-242; it reads GFFVTTVVNR…DWVPLPLMYP (160 aa). Residues 243–260 traverse the membrane as a helical segment; that stretch reads QLVCLAVNLYFLVSIIAR. Topologically, residues 261–278 are extracellular; that stretch reads QLVIEKHKMVDEVDVYFP. Residues 279 to 292 traverse the membrane as a helical segment; that stretch reads VMTFLQFIFYMGWL. The Cytoplasmic portion of the chain corresponds to 293–450; the sequence is KVIDVMLNPF…WKIPTNPQKF (158 aa). N300, D305, and D308 together coordinate Ca(2+).

It belongs to the anion channel-forming bestrophin (TC 1.A.46) family. Calcium-sensitive chloride channel subfamily. In terms of assembly, forms oligomers.

The protein localises to the cell membrane. The catalysed reaction is chloride(in) = chloride(out). Functionally, ligand-gated anion channel that allows the movement of chloride monoatomic anions across cell membranes when activated by Calcium (Ca2+). This chain is Bestrophin homolog 1 (best-1), found in Caenorhabditis elegans.